The sequence spans 292 residues: Rhodanese-like domain-containing protein 11, chloroplastic (292 aa).

A chloroplast-targeting transit peptide spans 1–56 (MESLSLPVLNPLLASGSNLFRNQHSRMTSSMVSSLKSPIGGTSLSTVRRFGVGVVR). The 124-residue stretch at 101-224 (SLSNKPLLDV…AQDEDLVTEG (124 aa)) folds into the Rhodanese domain. Catalysis depends on Cys184, which acts as the Cysteine persulfide intermediate.

The protein localises to the plastid. It is found in the chloroplast. The protein is Rhodanese-like domain-containing protein 11, chloroplastic (STR11) of Arabidopsis thaliana (Mouse-ear cress).